A 39-amino-acid polypeptide reads, in one-letter code: Cytochrome b559 subunit beta (39 aa).

Residues tryptophan 14–serine 30 traverse the membrane as a helical segment. Position 18 (histidine 18) interacts with heme.

The protein belongs to the PsbE/PsbF family. In terms of assembly, heterodimer of an alpha subunit and a beta subunit. PSII is composed of 1 copy each of membrane proteins PsbA, PsbB, PsbC, PsbD, PsbE, PsbF, PsbH, PsbI, PsbJ, PsbK, PsbL, PsbM, PsbT, PsbX, PsbY, PsbZ, Psb30/Ycf12, at least 3 peripheral proteins of the oxygen-evolving complex and a large number of cofactors. It forms dimeric complexes. Heme b serves as cofactor.

The protein localises to the plastid. It is found in the chloroplast thylakoid membrane. Functionally, this b-type cytochrome is tightly associated with the reaction center of photosystem II (PSII). PSII is a light-driven water:plastoquinone oxidoreductase that uses light energy to abstract electrons from H(2)O, generating O(2) and a proton gradient subsequently used for ATP formation. It consists of a core antenna complex that captures photons, and an electron transfer chain that converts photonic excitation into a charge separation. This Ephedra sinica (Chinese ephedra) protein is Cytochrome b559 subunit beta.